We begin with the raw amino-acid sequence, 249 residues long: Formylaminopyrimidine import ATP-binding protein ThiZ (249 aa).

Residues 6–228 form the ABC transporter domain; sequence LTFEEVSFAY…RRKMETTEKM (223 aa). 39–46 contacts ATP; it reads AKSGSGKS.

This sequence belongs to the ABC transporter superfamily. As to quaternary structure, the complex is likely composed of an ATP-binding protein (ThiZ), a transmembrane protein (ThiX) and a solute-binding protein (ThiY).

The protein resides in the cell membrane. It functions in the pathway cofactor biosynthesis; thiamine diphosphate biosynthesis. Functionally, participates in a thiamine pyrimidine salvage pathway as part of the ABC transporter complex ThiXYZ involved in the import of thiamine degradation products such as the formylaminopyrimidine N-formyl-4-amino-5-aminomethyl-2-methylpyrimidine (FAMP). Is likely responsible for energy coupling to the transport system. This is Formylaminopyrimidine import ATP-binding protein ThiZ from Halalkalibacterium halodurans (strain ATCC BAA-125 / DSM 18197 / FERM 7344 / JCM 9153 / C-125) (Bacillus halodurans).